Consider the following 158-residue polypeptide: Interleukin-17A (158 aa).

The N-terminal stretch at 1-25 (MSPGRASSVSLMLLLLLSLAATVKA) is a signal peptide. Residue N71 is glycosylated (N-linked (GlcNAc...) asparagine). Disulfide bonds link C97–C147 and C102–C149.

The protein belongs to the IL-17 family. Homodimer. Forms complexes with IL17RA and IL17RC receptors with 2:1 binding stoichiometry: two receptor chains for one interleukin molecule. IL17A homodimer preferentially drives the formation of IL17RA-IL17RC heterodimeric receptor complex. IL17A homodimer adopts an asymmetrical ternary structure with one IL17RA molecule, allowing for high affinity interactions of one IL17A monomer with one IL17RA molecule (via D1 and D2 domains), while disfavoring binding of a second IL17RA molecule on the other IL17A monomer. Heterodimer with IL17F. IL17A-IL17F forms complexes with IL17RA-IL17RC, but with lower affinity when compared to IL17A homodimer. IL17RA and IL17RC chains cannot distinguish between IL17A and IL17F molecules, potentially enabling the formation of topologically distinct complexes. Expressed by Th17 cell lineage (at protein level). The expression pattern reflects the differentiation state, with IL17A-IL17F heterodimers produced at higher levels than IL17A-IL17A and IL17F-IL17F dimers in fully differentiated Th17 cells. Expressed in innate lymphoid cells (at protein level). Expressed in gamma-delta T cell subsets (at protein level). Expressed in iNKT cells (at protein level).

The protein localises to the secreted. Effector cytokine of innate and adaptive immune system involved in antimicrobial host defense and maintenance of tissue integrity. Signals via IL17RA-IL17RC heterodimeric receptor complex, triggering homotypic interaction of IL17RA and IL17RC chains with TRAF3IP2 adapter. This leads to downstream TRAF6-mediated activation of NF-kappa-B and MAPkinase pathways ultimately resulting in transcriptional activation of cytokines, chemokines, antimicrobial peptides and matrix metalloproteinases, with potential strong immune inflammation. Plays an important role in connecting T cell-mediated adaptive immunity and acute inflammatory response to destroy extracellular bacteria and fungi. As a signature effector cytokine of T-helper 17 cells (Th17), primarily induces neutrophil activation and recruitment at infection and inflammatory sites. In airway epithelium, mediates neutrophil chemotaxis via induction of CXCL1 and CXCL5 chemokines. In secondary lymphoid organs, contributes to germinal center formation by regulating the chemotactic response of B cells to CXCL12 and CXCL13, enhancing retention of B cells within the germinal centers, B cell somatic hypermutation rate and selection toward plasma cells. Effector cytokine of a subset of gamma-delta T cells that functions as part of an inflammatory circuit downstream IL1B, TLR2 and IL23A-IL12B to promote neutrophil recruitment for efficient bacterial clearance. Effector cytokine of innate immune cells including invariant natural killer cell (iNKT) and group 3 innate lymphoid cells that mediate initial neutrophilic inflammation. Involved in the maintenance of the integrity of epithelial barriers during homeostasis and pathogen infection. Upon acute injury, has a direct role in epithelial barrier formation by regulating OCLN localization and tight junction biogenesis. As part of the mucosal immune response induced by commensal bacteria, enhances host's ability to resist pathogenic bacterial and fungal infections by promoting neutrophil recruitment and antimicrobial peptides release. In synergy with IL17F, mediates the production of antimicrobial beta-defensins DEFB1, DEFB103A, and DEFB104A by mucosal epithelial cells, limiting the entry of microbes through the epithelial barriers. Involved in antiviral host defense through various mechanisms. Enhances immunity against West Nile virus by promoting T cell cytotoxicity. May play a beneficial role in influenza A virus (H5N1) infection by enhancing B cell recruitment and immune response in the lung. Contributes to influenza A virus (H1N1) clearance by driving the differentiation of B-1a B cells, providing for production of virus-specific IgM antibodies at first line of host defense. The sequence is that of Interleukin-17A (Il17a) from Mus musculus (Mouse).